The primary structure comprises 302 residues: Sulfotransferase 1C4 (302 aa).

3'-phosphoadenylyl sulfate is bound at residue 55–60 (KAGTTW). Position 113–115 (113–115 (KTH)) interacts with substrate. The Proton acceptor role is filled by His115. 3'-phosphoadenylyl sulfate contacts are provided by residues Arg137, Ser145, Tyr200, 234-239 (TSFDVM), and 262-266 (FMRKG).

This sequence belongs to the sulfotransferase 1 family. Expressed at high levels in fetal lung and kidney and at low levels in fetal heart, adult kidney, ovary and spinal cord.

The protein localises to the cytoplasm. Its subcellular location is the cytosol. The catalysed reaction is a phenol + 3'-phosphoadenylyl sulfate = an aryl sulfate + adenosine 3',5'-bisphosphate + H(+). It carries out the reaction 17beta-estradiol + 3'-phosphoadenylyl sulfate = 17beta-estradiol 3-sulfate + adenosine 3',5'-bisphosphate + H(+). It catalyses the reaction bisphenol A + 3'-phosphoadenylyl sulfate = bisphenyl A sulfate + adenosine 3',5'-bisphosphate + H(+). In terms of biological role, sulfotransferase that utilizes 3'-phospho-5'-adenylyl sulfate (PAPS) as sulfonate donor to catalyze the sulfate conjugation of phenolic compounds. Can also sulfonate estrogenic compounds, however, the dietary flavonoids (phytoestrogen) and environmental estrogens, like bisphenol A are better substrates than 17beta-estradiol (E2). Mediates the sulfation of doxorubicin and its analog epirubicin, two antitumor anthracyclines. The chain is Sulfotransferase 1C4 from Homo sapiens (Human).